The following is a 386-amino-acid chain: Methionine aminopeptidase 1 (386 aa).

A2 carries the N-acetylalanine modification. The C6H2-type zinc finger occupies 6 to 59 (TRVCETDGCSSEAKLQCPTCIKLGIQGSYFCSQECFKGSWATHKLLHKKAKDEK). The Zn(2+) site is built by C9, C14, C22, C25, C36, C40, H48, H52, and K53. Residue H203 coordinates a protein. Zn(2+) is bound by residues D220, D231, and H294. Position 301 (H301) interacts with a protein. Zn(2+) is bound by residues E327 and E358.

Belongs to the peptidase M24A family. Methionine aminopeptidase type 1 subfamily. In terms of assembly, associates with the 60S ribosomal subunit of the 80S translational complex. Requires Zn(2+) as cofactor. Co(2+) serves as cofactor. Mn(2+) is required as a cofactor. It depends on Fe(2+) as a cofactor.

The protein resides in the cytoplasm. The enzyme catalyses Release of N-terminal amino acids, preferentially methionine, from peptides and arylamides.. Functionally, cotranslationally removes the N-terminal methionine from nascent proteins. The N-terminal methionine is often cleaved when the second residue in the primary sequence is small and uncharged (Met-Ala-, Cys, Gly, Pro, Ser, Thr, or Val). The chain is Methionine aminopeptidase 1 (Metap1) from Mus musculus (Mouse).